We begin with the raw amino-acid sequence, 79 residues long: MPKRILEGVVVSDKGDKTVVVKVERTIVHPVLKKIVRQSKKYHAHDEANAYKAGEAIRIIECAPKSKLKTWEVLPKASA.

The protein belongs to the universal ribosomal protein uS17 family. In terms of assembly, part of the 30S ribosomal subunit.

Functionally, one of the primary rRNA binding proteins, it binds specifically to the 5'-end of 16S ribosomal RNA. The protein is Small ribosomal subunit protein uS17 of Caulobacter vibrioides (strain NA1000 / CB15N) (Caulobacter crescentus).